The sequence spans 225 residues: MGYPTPIKLGLSAPINVPLIYKTGEKMRYVAYKIYPEEFLNNEVVDNALIIEGRKVRRVRILGKVENINVGNIISFYVDGVNVRYFEEKPVYIEEGDIVDVIGRPRTYDGEKYIMAEIIRKRDERWIKLRDLEIKKTRKYLLERAELYEEENEEMSLEEEVYTEILNSDVIKDKILAIIENVGEITYEELAEKINIPEEDLEKYLSELKESGDIFEPRPGVYKVL.

Positions 166-214 (LNSDVIKDKILAIIENVGEITYEELAEKINIPEEDLEKYLSELKESGDI) constitute a PCI domain.

This is an uncharacterized protein from Methanocaldococcus jannaschii (strain ATCC 43067 / DSM 2661 / JAL-1 / JCM 10045 / NBRC 100440) (Methanococcus jannaschii).